The following is a 194-amino-acid chain: MIKVEDILRAYRHGFFPMADSREGTVSWCQPYQRAVVPLDSFRPSRSLRRVIGKKRFTIKINSVFEQVIRACSQPRSTGQETWLSEEIIKVFLKLHRLGVAHSVESWQDGELAGGLYGLSMGGAFFGESMFFFRSDASKVAFAWLVGYLKRKGYLLLDAQIMNPHLESLGAIEIPHEEYMVQLERALGKKISFV.

The protein belongs to the L/F-transferase family.

It localises to the cytoplasm. The enzyme catalyses N-terminal L-lysyl-[protein] + L-leucyl-tRNA(Leu) = N-terminal L-leucyl-L-lysyl-[protein] + tRNA(Leu) + H(+). The catalysed reaction is N-terminal L-arginyl-[protein] + L-leucyl-tRNA(Leu) = N-terminal L-leucyl-L-arginyl-[protein] + tRNA(Leu) + H(+). It catalyses the reaction L-phenylalanyl-tRNA(Phe) + an N-terminal L-alpha-aminoacyl-[protein] = an N-terminal L-phenylalanyl-L-alpha-aminoacyl-[protein] + tRNA(Phe). Its function is as follows. Functions in the N-end rule pathway of protein degradation where it conjugates Leu, Phe and, less efficiently, Met from aminoacyl-tRNAs to the N-termini of proteins containing an N-terminal arginine or lysine. The polypeptide is Leucyl/phenylalanyl-tRNA--protein transferase (Chlorobaculum tepidum (strain ATCC 49652 / DSM 12025 / NBRC 103806 / TLS) (Chlorobium tepidum)).